Here is a 380-residue protein sequence, read N- to C-terminus: Tomoregulin-1 (380 aa).

The N-terminal stretch at Met-1–Ala-39 is a signal peptide. Topologically, residues Ser-40–Val-330 are extracellular. Kazal-like domains are found at residues Ala-98–Ser-145 and Val-189–Asp-237. 9 disulfide bridges follow: Cys-99/Cys-129, Cys-103/Cys-122, Cys-111/Cys-143, Cys-190/Cys-221, Cys-194/Cys-214, Cys-203/Cys-235, Cys-275/Cys-288, Cys-283/Cys-299, and Cys-301/Cys-310. Positions Asn-271–Glu-311 constitute an EGF-like domain. Residues Leu-331–Ile-351 traverse the membrane as a helical segment. Residues Thr-352–Val-380 are Cytoplasmic-facing. Residues Asn-359–Val-380 form a disordered region. The segment covering Gln-366 to Val-380 has biased composition (polar residues).

The protein belongs to the tomoregulin family. May interact with ST14. In terms of tissue distribution, expressed predominantly in brain, and at lower levels in heart, placenta and skeletal muscle. Down-regulated in brain tumors as compared to control brain tissues.

Its subcellular location is the cell membrane. Neuron-specific restriction factor that prevents herpes simplex virus 1 (HHV-1) infection in the brain by blocking viral entry. Also able to restrict herpes simplex virus 2 (HHV-2) infection, although to a lesser extent. Acts by preventing the association between the viral glycoprotein D (gD) and its cell surface receptor NECTIN1, thereby inhibiting fusion of the virus and the cell membrane. Also able to prevent the association between the viral glycoprotein B (gB) and MYH9/NMMHC-IIA and MYH10/NMMHC-IIB receptors. May be a tumor suppressor in brain cancers. The sequence is that of Tomoregulin-1 from Homo sapiens (Human).